Here is an 860-residue protein sequence, read N- to C-terminus: Leucine--tRNA ligase (860 aa).

The 'HIGH' region signature appears at 42 to 52 (PYPSGRLHMGH). The 'KMSKS' region signature appears at 619 to 623 (KMSKS). Lys-622 serves as a coordination point for ATP.

The protein belongs to the class-I aminoacyl-tRNA synthetase family.

The protein localises to the cytoplasm. It catalyses the reaction tRNA(Leu) + L-leucine + ATP = L-leucyl-tRNA(Leu) + AMP + diphosphate. The chain is Leucine--tRNA ligase from Escherichia coli (strain 55989 / EAEC).